Consider the following 286-residue polypeptide: 33 kDa chaperonin (286 aa).

Disulfide bonds link Cys-236/Cys-238 and Cys-264/Cys-267.

This sequence belongs to the HSP33 family. Under oxidizing conditions two disulfide bonds are formed involving the reactive cysteines. Under reducing conditions zinc is bound to the reactive cysteines and the protein is inactive.

It localises to the cytoplasm. Its function is as follows. Redox regulated molecular chaperone. Protects both thermally unfolding and oxidatively damaged proteins from irreversible aggregation. Plays an important role in the bacterial defense system toward oxidative stress. The polypeptide is 33 kDa chaperonin (Carboxydothermus hydrogenoformans (strain ATCC BAA-161 / DSM 6008 / Z-2901)).